The sequence spans 81 residues: Antitoxin MT2731 (81 aa).

Antitoxin component of a type II toxin-antitoxin (TA) system. Neutralizes the effect of cognate toxin MT2730. This is Antitoxin MT2731 from Mycobacterium tuberculosis (strain CDC 1551 / Oshkosh).